An 883-amino-acid polypeptide reads, in one-letter code: Alanine--tRNA ligase (883 aa).

Positions 562, 566, 664, and 668 each coordinate Zn(2+).

Belongs to the class-II aminoacyl-tRNA synthetase family. Homotetramer. Zn(2+) serves as cofactor.

It is found in the cytoplasm. The enzyme catalyses tRNA(Ala) + L-alanine + ATP = L-alanyl-tRNA(Ala) + AMP + diphosphate. In terms of biological role, catalyzes the attachment of alanine to tRNA(Ala) in a two-step reaction: alanine is first activated by ATP to form Ala-AMP and then transferred to the acceptor end of tRNA(Ala). Also edits incorrectly charged Ser-tRNA(Ala) and Gly-tRNA(Ala) via its editing domain. The chain is Alanine--tRNA ligase from Buchnera aphidicola subsp. Schizaphis graminum (strain Sg).